The following is a 95-amino-acid chain: Large ribosomal subunit protein bL25 (95 aa).

Belongs to the bacterial ribosomal protein bL25 family. In terms of assembly, part of the 50S ribosomal subunit; part of the 5S rRNA/L5/L18/L25 subcomplex. Contacts the 5S rRNA. Binds to the 5S rRNA independently of L5 and L18.

In terms of biological role, this is one of the proteins that binds to the 5S RNA in the ribosome where it forms part of the central protuberance. The sequence is that of Large ribosomal subunit protein bL25 from Glaesserella parasuis serovar 5 (strain SH0165) (Haemophilus parasuis).